The following is a 46-amino-acid chain: Large ribosomal subunit protein bL34 (46 aa).

Belongs to the bacterial ribosomal protein bL34 family.

The protein is Large ribosomal subunit protein bL34 of Synechococcus sp. (strain JA-2-3B'a(2-13)) (Cyanobacteria bacterium Yellowstone B-Prime).